Reading from the N-terminus, the 217-residue chain is Melanocortin-2 receptor accessory protein 2A (217 aa).

An N-linked (GlcNAc...) asparagine glycan is attached at Asn8. The helical transmembrane segment at 42–62 threads the bilayer; it reads IVIGFWVGLAVFVIFMFFVLT.

It belongs to the MRAP family. Interacts with mc4r.

The protein resides in the cell membrane. Its subcellular location is the endoplasmic reticulum membrane. Functionally, inhibitor of melanocortin receptor 4 (mc4r), a receptor involved in energy homeostasis. Plays a role during larval development in the control of energy homeostasis and body weight regulation by decreasing ligand-sensitivity of mc4r and mc4r-mediated generation of cAMP, leading to stimulate growth during larval development. Acts by stabilizing an inactive conformation of mc4r during embryonic development, when all the energy consumed is obtained from the yolk sac, possibly to speed the rapid maturation to the mobile free-feeding juvenile stage reached at 5 dpf. This chain is Melanocortin-2 receptor accessory protein 2A (mrap2a), found in Danio rerio (Zebrafish).